A 1128-amino-acid polypeptide reads, in one-letter code: Major DNA-binding protein (1128 aa).

Residues 453-466 fold into a zinc finger; the sequence is CELCQGTCPASCIH. The tract at residues 1098-1128 is required for nuclear localization; the sequence is QIEEFAPQATLSTLAASRKRKITSILSDIDL.

Belongs to the herpesviridae major DNA-binding protein family. Homooligomers. Forms double-helical filaments necessary for the formation of replication compartments within the host nucleus. Interacts with the origin-binding protein. Interacts with the helicase primase complex; this interaction stimulates primer synthesis activity of the helicase-primase complex. Interacts with the DNA polymerase. Interacts with the alkaline exonuclease; this interaction increases its nuclease processivity.

The protein localises to the host nucleus. In terms of biological role, single-stranded DNA-binding protein required for DNA replication. Its function is as follows. Plays several crucial roles in viral infection. Participates in the opening of the viral DNA origin to initiate replication by interacting with the origin-binding protein. May disrupt loops, hairpins and other secondary structures present on ssDNA to reduce and eliminate pausing of viral DNA polymerase at specific sites during elongation. Promotes viral DNA recombination by performing strand-transfer, characterized by the ability to transfer a DNA strand from a linear duplex to a complementary single-stranded DNA circle. Can also catalyze the renaturation of complementary single strands. Additionally, reorganizes the host cell nucleus, leading to the formation of prereplicative sites and replication compartments. This process is driven by the protein which can form double-helical filaments in the absence of DNA. The chain is Major DNA-binding protein from Saimiri sciureus (Common squirrel monkey).